A 306-amino-acid polypeptide reads, in one-letter code: uncharacterized protein (306 aa).

This is an uncharacterized protein from Treponema pallidum (strain Nichols).